The sequence spans 453 residues: Bifunctional protein GlmU (453 aa).

The tract at residues 1–226 (MKFSTVILAA…SIEVEGVNDR (226 aa)) is pyrophosphorylase. Residues 8–11 (LAAG), Lys22, Gln73, 78–79 (GT), 100–102 (YGD), Gly137, Glu151, Asn166, and Asn224 contribute to the UDP-N-acetyl-alpha-D-glucosamine site. Residue Asp102 participates in Mg(2+) binding. Asn224 provides a ligand contact to Mg(2+). Residues 227–247 (IQLARLERAFQARQAKKLLEQ) are linker. The segment at 248–453 (GVMLRDPARF…AGWQRPAKKK (206 aa)) is N-acetyltransferase. Positions 330 and 348 each coordinate UDP-N-acetyl-alpha-D-glucosamine. His360 serves as the catalytic Proton acceptor. UDP-N-acetyl-alpha-D-glucosamine contacts are provided by Tyr363 and Asn374. Acetyl-CoA-binding positions include Ala377, 383-384 (NY), Ser402, Ala420, and Arg437.

This sequence in the N-terminal section; belongs to the N-acetylglucosamine-1-phosphate uridyltransferase family. The protein in the C-terminal section; belongs to the transferase hexapeptide repeat family. As to quaternary structure, homotrimer. It depends on Mg(2+) as a cofactor.

Its subcellular location is the cytoplasm. The catalysed reaction is alpha-D-glucosamine 1-phosphate + acetyl-CoA = N-acetyl-alpha-D-glucosamine 1-phosphate + CoA + H(+). The enzyme catalyses N-acetyl-alpha-D-glucosamine 1-phosphate + UTP + H(+) = UDP-N-acetyl-alpha-D-glucosamine + diphosphate. It participates in nucleotide-sugar biosynthesis; UDP-N-acetyl-alpha-D-glucosamine biosynthesis; N-acetyl-alpha-D-glucosamine 1-phosphate from alpha-D-glucosamine 6-phosphate (route II): step 2/2. The protein operates within nucleotide-sugar biosynthesis; UDP-N-acetyl-alpha-D-glucosamine biosynthesis; UDP-N-acetyl-alpha-D-glucosamine from N-acetyl-alpha-D-glucosamine 1-phosphate: step 1/1. Its pathway is bacterial outer membrane biogenesis; LPS lipid A biosynthesis. Its function is as follows. Catalyzes the last two sequential reactions in the de novo biosynthetic pathway for UDP-N-acetylglucosamine (UDP-GlcNAc). The C-terminal domain catalyzes the transfer of acetyl group from acetyl coenzyme A to glucosamine-1-phosphate (GlcN-1-P) to produce N-acetylglucosamine-1-phosphate (GlcNAc-1-P), which is converted into UDP-GlcNAc by the transfer of uridine 5-monophosphate (from uridine 5-triphosphate), a reaction catalyzed by the N-terminal domain. The chain is Bifunctional protein GlmU from Vibrio cholerae serotype O1 (strain M66-2).